The chain runs to 222 residues: 3-demethoxyubiquinol 3-hydroxylase (222 aa).

6 residues coordinate Fe cation: Glu-71, Glu-101, His-104, Glu-153, Glu-185, and His-188.

The protein belongs to the COQ7 family. Fe cation serves as cofactor.

The protein localises to the cell membrane. The enzyme catalyses a 5-methoxy-2-methyl-3-(all-trans-polyprenyl)benzene-1,4-diol + AH2 + O2 = a 3-demethylubiquinol + A + H2O. Its pathway is cofactor biosynthesis; ubiquinone biosynthesis. In terms of biological role, catalyzes the hydroxylation of 2-nonaprenyl-3-methyl-6-methoxy-1,4-benzoquinol during ubiquinone biosynthesis. This is 3-demethoxyubiquinol 3-hydroxylase from Bordetella pertussis (strain Tohama I / ATCC BAA-589 / NCTC 13251).